The chain runs to 339 residues: Uroporphyrinogen decarboxylase (339 aa).

Substrate-binding positions include Arg21 to Arg25, Phe40, Asp71, Tyr147, Ser202, and His315.

It belongs to the uroporphyrinogen decarboxylase family. As to quaternary structure, homodimer.

It localises to the cytoplasm. The catalysed reaction is uroporphyrinogen III + 4 H(+) = coproporphyrinogen III + 4 CO2. It functions in the pathway porphyrin-containing compound metabolism; protoporphyrin-IX biosynthesis; coproporphyrinogen-III from 5-aminolevulinate: step 4/4. Its function is as follows. Catalyzes the decarboxylation of four acetate groups of uroporphyrinogen-III to yield coproporphyrinogen-III. This Helicobacter pylori (strain J99 / ATCC 700824) (Campylobacter pylori J99) protein is Uroporphyrinogen decarboxylase.